The following is a 327-amino-acid chain: Phenylalanine--tRNA ligase alpha subunit (327 aa).

Glu252 lines the Mg(2+) pocket.

Belongs to the class-II aminoacyl-tRNA synthetase family. Phe-tRNA synthetase alpha subunit type 1 subfamily. Tetramer of two alpha and two beta subunits. The cofactor is Mg(2+).

Its subcellular location is the cytoplasm. It carries out the reaction tRNA(Phe) + L-phenylalanine + ATP = L-phenylalanyl-tRNA(Phe) + AMP + diphosphate + H(+). The chain is Phenylalanine--tRNA ligase alpha subunit from Tolumonas auensis (strain DSM 9187 / NBRC 110442 / TA 4).